The following is a 186-amino-acid chain: Adenine phosphoribosyltransferase (186 aa).

Belongs to the purine/pyrimidine phosphoribosyltransferase family. As to quaternary structure, homodimer.

Its subcellular location is the cytoplasm. The catalysed reaction is AMP + diphosphate = 5-phospho-alpha-D-ribose 1-diphosphate + adenine. Its pathway is purine metabolism; AMP biosynthesis via salvage pathway; AMP from adenine: step 1/1. In terms of biological role, catalyzes a salvage reaction resulting in the formation of AMP, that is energically less costly than de novo synthesis. This is Adenine phosphoribosyltransferase from Xanthomonas campestris pv. campestris (strain B100).